The primary structure comprises 206 residues: Thymidylate kinase (206 aa).

Position 14-21 (14-21) interacts with ATP; the sequence is GGEGIGKS.

This sequence belongs to the thymidylate kinase family.

The enzyme catalyses dTMP + ATP = dTDP + ADP. Phosphorylation of dTMP to form dTDP in both de novo and salvage pathways of dTTP synthesis. The sequence is that of Thymidylate kinase from Rickettsia bellii (strain RML369-C).